The chain runs to 979 residues: Translation initiation factor IF-2 (979 aa).

A disordered region spans residues 68–386 (VKQKQGTPAS…DKRDAASRAA (319 aa)). Basic and acidic residues-rich tracts occupy residues 102–179 (QDMR…KPEE), 217–229 (EMEK…EVFR), and 260–273 (TKED…DADG). The span at 317–326 (RPAQQQSNAS) shows a compositional bias: polar residues. The segment covering 347–356 (DVQRQVKETL) has biased composition (basic and acidic residues). The tr-type G domain maps to 478–646 (ARPPIVTVMG…KVLLEADILE (169 aa)). The interval 487 to 494 (GHVDHGKT) is G1. 487–494 (GHVDHGKT) is a GTP binding site. Residues 512-516 (GITQH) are G2. A G3 region spans residues 534-537 (DTPG). GTP-binding positions include 534 to 538 (DTPGH) and 588 to 591 (NKID). Residues 588-591 (NKID) form a G4 region. The tract at residues 624 to 626 (SAK) is G5.

The protein belongs to the TRAFAC class translation factor GTPase superfamily. Classic translation factor GTPase family. IF-2 subfamily.

It is found in the cytoplasm. Its function is as follows. One of the essential components for the initiation of protein synthesis. Protects formylmethionyl-tRNA from spontaneous hydrolysis and promotes its binding to the 30S ribosomal subunits. Also involved in the hydrolysis of GTP during the formation of the 70S ribosomal complex. The sequence is that of Translation initiation factor IF-2 from Porphyromonas gingivalis (strain ATCC BAA-308 / W83).